Reading from the N-terminus, the 1180-residue chain is Protocadherin-12 (1180 aa).

Positions 1–17 are cleaved as a signal peptide; that stretch reads MMLLLPFLLGLLGPGSY. The Extracellular portion of the chain corresponds to 18–716; it reads LFISGDCQEV…HEPGVLSTPA (699 aa). 5 Cadherin domains span residues 28–135, 136–244, 245–352, 355–460, and 461–565; these read ATVM…QPQF, PKDE…SPVF, AESS…APSI, TWAS…APVF, and EKSR…APEV. 2 N-linked (GlcNAc...) asparagine glycosylation sites follow: Asn265 and Asn415. N-linked (GlcNAc...) asparagine glycans are attached at residues Asn582, Asn659, and Asn662. In terms of domain architecture, Cadherin 6 spans 600 to 711; sequence PAGTGIPPKA…LRDSAHEPGV (112 aa). A helical transmembrane segment spans residues 717–737; sequence LALICLAVLLAIFGLLLALFV. At 738–1180 the chain is on the cytoplasmic side; sequence SICRTERKDN…ESRLGCGRNL (443 aa). 2 disordered regions span residues 857-930 and 973-1026; these read NASR…GPHQ and QFQP…PEED. A Phosphoserine modification is found at Ser859. Polar residues predominate over residues 904-918; the sequence is PASSATLRRQRNFNG. The span at 1014 to 1026 shows a compositional bias: acidic residues; the sequence is PDLEEGPPSPEED. Position 1064 is a phosphoserine (Ser1064). Over residues 1076–1093 the composition is skewed to polar residues; that stretch reads SSPDATTSEEPRTFQTFG. Disordered regions lie at residues 1076–1104 and 1156–1180; these read SSPD…ELSP and SGAS…GRNL.

In terms of processing, N-glycosylated. Post-translationally, cleaved by ADAM10 close to the transmembrane domain to release the Protocadherin-12, secreted form in the serum. Cleavage results in reduced cellular adhesion in a cell migration assay. In terms of tissue distribution, expressed in endothelial cells: localizes in vasculogenic rather than angiogenic endothelium. Strongly expressed in a subset of invasive cells of the placenta, named glycogen-rich trophoblasts cells (at protein level). glycogen-rich trophoblasts cells originate from the from the ectoplacental cone where they rapidly form tight islets (at protein level). In adult mice, present at high level in mesangial cells of kidney glomeruli, while expression was not detected in other types of perivascular cells.

It localises to the cell membrane. Its subcellular location is the cell junction. The protein localises to the secreted. Its function is as follows. Cellular adhesion molecule that may play an important role in cell-cell interactions at interendothelial junctions. Acts as a regulator of cell migration, probably via increasing cell-cell adhesion. Promotes homotypic calcium-dependent aggregation and adhesion and clusters at intercellular junctions. Unable to bind to catenins, weakly associates with the cytoskeleton. In Mus musculus (Mouse), this protein is Protocadherin-12.